Consider the following 458-residue polypeptide: Histone acetyltransferase Tip60 homolog (458 aa).

Residues 1-24 are disordered; that stretch reads MTEPKKEIIEDENHGISKKIPTDP. The Tudor-knot domain maps to 30 to 86; it reads VTEGCRLLVMMASQEEERWAEVISRCRAANGSIKFYVHYIDCNRRLDEWVQSDRLNL. A disordered region spans residues 94-123; sequence KGGKKGAHLREENRDSNENEGKKSGRKRKI. The span at 101–116 shows a compositional bias: basic and acidic residues; the sequence is HLREENRDSNENEGKK. The MYST-type HAT domain occupies 168-446; sequence TRIRNVECIE…INPAALQWRP (279 aa). Residues 201-226 form a C2HC MYST-type zinc finger; sequence IYICEFCLKYLKSKTCLKRHMEKCAM. Lysine 268 is modified (N6-acetyllysine; by autocatalysis). Acetyl-CoA contacts are provided by residues 311-313 and 318-324; these read ILV and QKKGYGS. Residue glutamate 344 is the Proton donor/acceptor of the active site. 2 residues coordinate acetyl-CoA: serine 348 and serine 357.

It belongs to the MYST (SAS/MOZ) family. As to quaternary structure, interacts with transcription-associated protein trr-1. Probably a component of a complex with histone acetyltransferase (HAT) activity, at least composed of mys-1 and trr-1. In terms of processing, autoacetylation at Lys-268 is required for binding histones with high affinity and for proper function.

Its subcellular location is the nucleus. It catalyses the reaction L-lysyl-[protein] + acetyl-CoA = N(6)-acetyl-L-lysyl-[protein] + CoA + H(+). Probable catalytic subunit of the Tip60 chromatin-remodeling complex. Plays a role in acetylation of nucleosomal histone H4 and perhaps also H2A, probably acting as a component of the Tip60 histone acetyltransferase complex. Acts in the determination of vulval and distal tip cell (DTC) precursor cell fates. Involved in the positive regulation of transcription factor daf-16, probably acting by histone acetylation; thereby modulating stress resistance. This chain is Histone acetyltransferase Tip60 homolog, found in Caenorhabditis elegans.